Consider the following 373-residue polypeptide: Queuine tRNA-ribosyltransferase (373 aa).

Catalysis depends on Asp89, which acts as the Proton acceptor. Substrate-binding positions include 89–93, Asp143, Gln192, and Gly220; that span reads DSGGF. The tract at residues 251–257 is RNA binding; it reads GVGTPED. The active-site Nucleophile is the Asp270. The segment at 275–279 is RNA binding; important for wobble base 34 recognition; the sequence is TRNAR. Residues Cys308, Cys310, Cys313, and His339 each coordinate Zn(2+).

Belongs to the queuine tRNA-ribosyltransferase family. As to quaternary structure, homodimer. Within each dimer, one monomer is responsible for RNA recognition and catalysis, while the other monomer binds to the replacement base PreQ1. It depends on Zn(2+) as a cofactor.

It carries out the reaction 7-aminomethyl-7-carbaguanine + guanosine(34) in tRNA = 7-aminomethyl-7-carbaguanosine(34) in tRNA + guanine. It participates in tRNA modification; tRNA-queuosine biosynthesis. In terms of biological role, catalyzes the base-exchange of a guanine (G) residue with the queuine precursor 7-aminomethyl-7-deazaguanine (PreQ1) at position 34 (anticodon wobble position) in tRNAs with GU(N) anticodons (tRNA-Asp, -Asn, -His and -Tyr). Catalysis occurs through a double-displacement mechanism. The nucleophile active site attacks the C1' of nucleotide 34 to detach the guanine base from the RNA, forming a covalent enzyme-RNA intermediate. The proton acceptor active site deprotonates the incoming PreQ1, allowing a nucleophilic attack on the C1' of the ribose to form the product. After dissociation, two additional enzymatic reactions on the tRNA convert PreQ1 to queuine (Q), resulting in the hypermodified nucleoside queuosine (7-(((4,5-cis-dihydroxy-2-cyclopenten-1-yl)amino)methyl)-7-deazaguanosine). The polypeptide is Queuine tRNA-ribosyltransferase (Aliarcobacter butzleri (strain RM4018) (Arcobacter butzleri)).